The chain runs to 372 residues: Glutamate 5-kinase (372 aa).

An ATP-binding site is contributed by lysine 6. Positions 46, 133, and 145 each coordinate substrate. Residues 165-166 and 207-213 contribute to the ATP site; these read TD and TGGMYTK. Residues 272–350 form the PUA domain; sequence NGFLFVDEGA…HDIESILGYK (79 aa).

It belongs to the glutamate 5-kinase family.

The protein localises to the cytoplasm. The enzyme catalyses L-glutamate + ATP = L-glutamyl 5-phosphate + ADP. Its pathway is amino-acid biosynthesis; L-proline biosynthesis; L-glutamate 5-semialdehyde from L-glutamate: step 1/2. In terms of biological role, catalyzes the transfer of a phosphate group to glutamate to form L-glutamate 5-phosphate. The chain is Glutamate 5-kinase from Caldanaerobacter subterraneus subsp. tengcongensis (strain DSM 15242 / JCM 11007 / NBRC 100824 / MB4) (Thermoanaerobacter tengcongensis).